The chain runs to 677 residues: WD repeat-containing protein 48 (677 aa).

Y28 bears the Phosphotyrosine mark. 8 WD repeats span residues 28 to 67 (YNRNGVNALQLDPALNRLFTAGRDSIIRIWSVNQHKQDPY), 73 to 112 (HHTDWVNDIVLCCNGKTLISASSDTTVKVWNAHKGFCMST), 115 to 154 (THKDYVKALAYAKDKELVASAGLDRQIFLWDVNTLTALTA), 166 to 205 (GNKDSIYSLAMNQLGTIIVSGSTEKVLRVWDPRTCAKLMK), 208 to 247 (GHTDNVKALLLNRDGTQCLSGSSDGTIRLWSLGQQRCIAT), 250 to 289 (VHDEGVWALQVNDAFTHVYSGGRDRKIYCTDLRNPDIRVL), 292 to 334 (EEKA…NFRA), and 358 to 397 (KGGASIIQCHILNDKRHILTKDTNNNVAYWDVLKACKVED). Residue K214 is modified to N6-acetyllysine. K578 is subject to N6-acetyllysine. Positions 607–628 (LDNESQTTSSSNNEKPGEQEKE) are disordered. The span at 609–620 (NESQTTSSSNNE) shows a compositional bias: low complexity. T613 is subject to Phosphothreonine.

The protein belongs to the WD repeat WDR48 family. As to quaternary structure, interacts with USP46. Interacts with USP1. Interacts with USP12. Component of the USP12-WDR20-WDR48 deubiquitinating complex. Component of the USP12-DMWD-WDR48 deubiquitinating complex. Interacts with PHLPP1. Interacts with RAD51AP1; the interaction is direct and promotes formation of a trimeric complex with RAD51 via RAD51AP1. Interacts with ATAD5; the interaction regulates USP1-mediated PCNA deubiquitination. Interacts with RAD51; the interaction is enhanced under replication stress. Interacts with ITCH; the interaction is more efficient when both USP12 and WDR48/UAF1 are involved and may facilitate recruitment of the USP12 deubiquitinating complex to Notch. (Microbial infection) Interacts with papillomavirus HPV11 E1 protein. In terms of assembly, (Microbial infection) Interacts with Saimiriine herpesvirus TIP protein. As to quaternary structure, (Microbial infection) Interacts with human cytomegalovirus protein UL138. (Microbial infection) Interacts with Epstein-Barr virus protein EBNA3. Ubiquitous.

The protein resides in the nucleus. The protein localises to the cytoplasm. Its subcellular location is the lysosome. It is found in the late endosome. Functionally, regulator of deubiquitinating complexes, which acts as a strong activator of USP1, USP12 and USP46. Enhances the USP1-mediated deubiquitination of FANCD2; USP1 being almost inactive by itself. Activates deubiquitination by increasing the catalytic turnover without increasing the affinity of deubiquitinating enzymes for the substrate. Also activates deubiquitinating activity of complexes containing USP12. In complex with USP12, acts as a potential tumor suppressor by positively regulating PHLPP1 stability. Docks at the distal end of the USP12 fingers domain and induces a cascade of structural changes leading to the activation of the enzyme. Together with RAD51AP1, promotes DNA repair by stimulating RAD51-mediated homologous recombination. Binds single-stranded DNA (ssDNA) and double-stranded DNA (dsDNA). DNA-binding is required both for USP1-mediated deubiquitination of FANCD2 and stimulation of RAD51-mediated homologous recombination: both WDR48/UAF1 and RAD51AP1 have coordinated role in DNA-binding during these processes. Together with ATAD5 and by regulating USP1 activity, has a role in PCNA-mediated translesion synthesis (TLS) by deubiquitinating monoubiquitinated PCNA. Together with ATAD5, has a role in recruiting RAD51 to stalled forks during replication stress. In terms of biological role, (Microbial infection) In case of infection by Herpesvirus saimiri, may play a role in vesicular transport or membrane fusion events necessary for transport to lysosomes. Induces lysosomal vesicle formation via interaction with Herpesvirus saimiri tyrosine kinase-interacting protein (TIP). Subsequently, TIP recruits tyrosine-protein kinase LCK, resulting in down-regulation of T-cell antigen receptor TCR. May play a role in generation of enlarged endosomal vesicles via interaction with TIP. In case of infection by papillomavirus HPV11, promotes the maintenance of the viral genome via its interaction with HPV11 helicase E1. The chain is WD repeat-containing protein 48 from Homo sapiens (Human).